The primary structure comprises 387 residues: Chaperone protein DnaJ (387 aa).

One can recognise a J domain in the interval 5–70 (DYYEILEVSA…QKRQAYDQFG (66 aa)). A CR-type zinc finger spans residues 130 to 208 (GTTVDVRIPT…CRGEGYKHSS (79 aa)). Zn(2+) is bound by residues C143, C146, C160, C163, C182, C185, C196, and C199. 4 CXXCXGXG motif repeats span residues 143–150 (CESCDGSG), 160–167 (CPTCQGIG), 182–189 (CPNCHGTG), and 196–203 (CKTCRGEG).

The protein belongs to the DnaJ family. In terms of assembly, homodimer. The cofactor is Zn(2+).

The protein resides in the cytoplasm. Participates actively in the response to hyperosmotic and heat shock by preventing the aggregation of stress-denatured proteins and by disaggregating proteins, also in an autonomous, DnaK-independent fashion. Unfolded proteins bind initially to DnaJ; upon interaction with the DnaJ-bound protein, DnaK hydrolyzes its bound ATP, resulting in the formation of a stable complex. GrpE releases ADP from DnaK; ATP binding to DnaK triggers the release of the substrate protein, thus completing the reaction cycle. Several rounds of ATP-dependent interactions between DnaJ, DnaK and GrpE are required for fully efficient folding. Also involved, together with DnaK and GrpE, in the DNA replication of plasmids through activation of initiation proteins. The chain is Chaperone protein DnaJ from Hydrogenovibrio crunogenus (strain DSM 25203 / XCL-2) (Thiomicrospira crunogena).